The primary structure comprises 538 residues: CTP synthase (538 aa).

The segment at Met1–Leu265 is amidoligase domain. Position 13 (Ser13) interacts with CTP. Residue Ser13 coordinates UTP. ATP-binding positions include Ser14–Leu19 and Asp71. Residues Asp71 and Glu139 each contribute to the Mg(2+) site. Residues Asp146–Glu148, Lys186–Gln191, and Lys222 each bind CTP. Residues Lys186–Gln191 and Lys222 contribute to the UTP site. Positions Asn291 to Lys538 constitute a Glutamine amidotransferase type-1 domain. Gly353 is a binding site for L-glutamine. Cys380 acts as the Nucleophile; for glutamine hydrolysis in catalysis. L-glutamine contacts are provided by residues Tyr381–Gln384, Glu404, and Arg468. Residues His513 and Glu515 contribute to the active site.

The protein belongs to the CTP synthase family. In terms of assembly, homotetramer.

It catalyses the reaction UTP + L-glutamine + ATP + H2O = CTP + L-glutamate + ADP + phosphate + 2 H(+). The catalysed reaction is L-glutamine + H2O = L-glutamate + NH4(+). It carries out the reaction UTP + NH4(+) + ATP = CTP + ADP + phosphate + 2 H(+). It functions in the pathway pyrimidine metabolism; CTP biosynthesis via de novo pathway; CTP from UDP: step 2/2. Allosterically activated by GTP, when glutamine is the substrate; GTP has no effect on the reaction when ammonia is the substrate. The allosteric effector GTP functions by stabilizing the protein conformation that binds the tetrahedral intermediate(s) formed during glutamine hydrolysis. Inhibited by the product CTP, via allosteric rather than competitive inhibition. Its function is as follows. Catalyzes the ATP-dependent amination of UTP to CTP with either L-glutamine or ammonia as the source of nitrogen. Regulates intracellular CTP levels through interactions with the four ribonucleotide triphosphates. This chain is CTP synthase, found in Pelagibacter ubique (strain HTCC1062).